The primary structure comprises 555 residues: Urocanate hydratase (555 aa).

NAD(+) is bound by residues 52–53 (GG), Gln130, 176–178 (GMG), Glu196, Arg201, 242–243 (NA), 263–267 (QTSAH), 273–274 (YL), and Tyr322. Cys410 is an active-site residue. An NAD(+)-binding site is contributed by Gly492.

Belongs to the urocanase family. Requires NAD(+) as cofactor.

It is found in the cytoplasm. It carries out the reaction 4-imidazolone-5-propanoate = trans-urocanate + H2O. It participates in amino-acid degradation; L-histidine degradation into L-glutamate; N-formimidoyl-L-glutamate from L-histidine: step 2/3. Functionally, catalyzes the conversion of urocanate to 4-imidazolone-5-propionate. The protein is Urocanate hydratase of Shewanella baltica (strain OS223).